A 770-amino-acid chain; its full sequence is Probable zinc transporter protein DDB_G0291141 (770 aa).

The Cytoplasmic segment spans residues 1–36; sequence MAGSLDDSIYNNGRSGGGGGGFKFSKGFNKDSISKR. Residues 37 to 57 form a helical membrane-spanning segment; sequence IIMMLFFSKGIRAWSCIILLY. The Extracellular portion of the chain corresponds to 58–62; the sequence is FLQSS. A helical membrane pass occupies residues 63-83; it reads ISIISASFYMCLFSAIFSVVV. The Cytoplasmic segment spans residues 84–100; the sequence is EKPWNLLSSLRPSQIKK. Residues 101 to 117 form a helical membrane-spanning segment; that stretch reads IIYHSIFNLLIIITWNS. The Extracellular segment spans residues 118–123; sequence SIKFIG. A helical membrane pass occupies residues 124-146; it reads PIGSILASDYTFSTYPLIFNSLL. Residues 147–154 lie on the Cytoplasmic side of the membrane; that stretch reads QGNFLATD. A helical transmembrane segment spans residues 155–175; sequence MSRGSIMLMIGYFLIPLFGIS. The Extracellular portion of the chain corresponds to 176–184; the sequence is NRLDILGYT. A helical membrane pass occupies residues 185–205; sequence SSQVFMIGLFSLIVHNVLVLW. Residues 206 to 224 are Cytoplasmic-facing; the sequence is KKTIVRSWNSGSSGGKNKL. Residues 225–245 traverse the membrane as a helical segment; sequence SSLGSCVSTIILFVFKLFEGF. Topologically, residues 246–262 are extracellular; the sequence is SSGSSGSDSINQVSYSQ. A helical membrane pass occupies residues 263–283; the sequence is LFVIAIITFILYSLNQFIDDV. Residues 284-291 lie on the Cytoplasmic side of the membrane; it reads SEKELTFN. The helical transmembrane segment at 292 to 312 threads the bilayer; the sequence is VLSKVSLTSSVIFGLLAALFI. Over 313-316 the chain is Extracellular; it reads GFKD. A helical membrane pass occupies residues 317–337; the sequence is FFHPILILSFIFIINAIHILY. At 338–404 the chain is on the cytoplasmic side; it reads SKSNDIQPMT…QIVDKPTSRR (67 aa). Residues 405–425 traverse the membrane as a helical segment; sequence IFTFLVINLMFMFVEMAYGIW. Over 426–434 the chain is Extracellular; it reads TNSLGLITD. The helical transmembrane segment at 435–455 threads the bilayer; that stretch reads ACHMFFDATALFIALVAEVIS. Residues 456–469 lie on the Cytoplasmic side of the membrane; it reads QWKQNDKYSYGYGR. The chain crosses the membrane as a helical span at residues 470-490; that stretch reads FQVLSGFVNGIFLIFIAVTIL. Over 491–507 the chain is Extracellular; that stretch reads MESVERLLEPPEINTDK. A helical transmembrane segment spans residues 508-528; that stretch reads LLLVSVLGFIINLIGIFSFHG. Over 529-592 the chain is Cytoplasmic; sequence DHGHSHGGGG…GVFLHLLADT (64 aa). Residues 532–566 form a disordered region; it reads HSHGGGGGHSHGGGEKKEKHHGHSHGGHGDHQQVT. Residues 593-613 traverse the membrane as a helical segment; the sequence is LGSVGVIVSSLIIQIWGYTLA. Position 614 (Asp614) is a topological domain, extracellular. A helical transmembrane segment spans residues 615–635; it reads PICSLLISILIFLSVLPLIAN. Residues 636-770 lie on the Cytoplasmic side of the membrane; that stretch reads TAKTLLQCTP…SSSSHHHRHN (135 aa). Positions 751-770 are disordered; that stretch reads DIHHNHSSSSSSSSHHHRHN.

The protein belongs to the cation diffusion facilitator (CDF) transporter (TC 2.A.4) family. SLC30A subfamily.

It is found in the membrane. May be involved in zinc transport from the cytoplasm to either intracellular organelles or extracellular spaces. The polypeptide is Probable zinc transporter protein DDB_G0291141 (Dictyostelium discoideum (Social amoeba)).